The chain runs to 201 residues: Probable calcium-binding protein CML15 (201 aa).

Residues 1-55 (MGKVRAFFSRKGRGNSSGRSRSMREAAMNVDWSPRPSDLAAAAAAKPRPPAAEDE) form a disordered region. 4 consecutive EF-hand domains span residues 51–86 (AAED…VGHA), 87–122 (VTDD…PPGD), 125–160 (AAEE…IGEA), and 161–196 (ATVA…GAGF). Residues Asp-64, Asn-66, Asp-68, Arg-70, Glu-75, Asp-100, Asp-102, Asp-104, Tyr-106, Glu-111, Asp-138, Asp-140, Asn-142, Glu-149, Asp-174, Asn-176, Asp-178, and Glu-185 each coordinate Ca(2+).

Its function is as follows. Potential calcium sensor. This Oryza sativa subsp. japonica (Rice) protein is Probable calcium-binding protein CML15 (CML15).